A 550-amino-acid chain; its full sequence is Pectinesterase 2.1 (550 aa).

N-linked (GlcNAc...) asparagine glycosylation occurs at Asn-179. Thr-312 and Gln-342 together coordinate substrate. Cysteines 331 and 358 form a disulfide. Residue Asp-365 is the Proton donor of the active site. Residue Asp-386 is the Nucleophile of the active site. A disulfide bridge links Cys-399 with Cys-433. Substrate contacts are provided by Arg-454 and Trp-456.

This sequence in the N-terminal section; belongs to the PMEI family. In the C-terminal section; belongs to the pectinesterase family.

It localises to the secreted. It is found in the cell wall. The catalysed reaction is [(1-&gt;4)-alpha-D-galacturonosyl methyl ester](n) + n H2O = [(1-&gt;4)-alpha-D-galacturonosyl](n) + n methanol + n H(+). Its pathway is glycan metabolism; pectin degradation; 2-dehydro-3-deoxy-D-gluconate from pectin: step 1/5. In terms of biological role, pectinesterase may play a role in cell wall metabolism during fruit growth and development prior to ripening and may be required for preparing cell walls for softening by polygalacturonase during fruit ripening. This Solanum lycopersicum (Tomato) protein is Pectinesterase 2.1 (PME2.1).